The sequence spans 182 residues: Dirigent protein 5 (182 aa).

The first 23 residues, 1 to 23 (MVGQMKSFLFLFVFLVLTKTVIS), serve as a signal peptide directing secretion. Cysteine 35 and cysteine 181 are joined by a disulfide. Asparagine 54 and asparagine 118 each carry an N-linked (GlcNAc...) asparagine glycan.

It belongs to the plant dirigent protein family. As to quaternary structure, homodimer. Confined to shoot meristem, vascular region of cotyledons and siliques abscission zone.

Its subcellular location is the secreted. It localises to the extracellular space. It is found in the apoplast. In terms of biological role, dirigent proteins impart stereoselectivity on the phenoxy radical-coupling reaction, yielding optically active lignans from two molecules of coniferyl alcohol in the biosynthesis of lignans, flavonolignans, and alkaloids and thus plays a central role in plant secondary metabolism. Enantiocomplementary dirigent protein that mediates the laccase-catalyzed enantioselective oxidative phenol coupling of (E)-coniferyl alcohol to (-)-pinoresinol. This is Dirigent protein 5 (DIR5) from Arabidopsis thaliana (Mouse-ear cress).